We begin with the raw amino-acid sequence, 740 residues long: Arf-GAP with coiled-coil, ANK repeat and PH domain-containing protein 1 (740 aa).

The 226-residue stretch at 1 to 226 (MTVKLDFEEC…RKELGTQLHN (226 aa)) folds into the BAR domain. The interval 1-382 (MTVKLDFEEC…RGPGQVSGYH (382 aa)) is required for formation of endosomal tubules when overexpressed with PIP5K1C. A PH domain is found at 265-360 (GLVMEGHLFK…WVSAVQSSIA (96 aa)). In terms of domain architecture, Arf-GAP spans 405–527 (GQVAAQVQSV…KFLTKLPEIR (123 aa)). Residues 405 to 740 (GQVAAQVQSV…SRRSHDLHTL (336 aa)) form a required for interaction with GULP1 region. The segment at 420–443 (CCDCREPAPEWASINLGVTLCIQC) adopts a C4-type zinc-finger fold. A 3'-nitrotyrosine modification is found at tyrosine 485. Residues 525–562 (EIRGRRGGRGPPRGHPPVPPKPPIRPHSGIVRSKSECP) form a disordered region. Positions 525–566 (EIRGRRGGRGPPRGHPPVPPKPPIRPHSGIVRSKSECPSDDM) are prevents interaction with ITGB1 when S-554 is not phosphorylated. Pro residues predominate over residues 537-549 (RGHPPVPPKPPIR). 3 ANK repeats span residues 606 to 635 (GNAT…NVNQ), 639 to 668 (AGRG…DLGA), and 672 to 702 (EGRD…EAEA).

In terms of assembly, banana-shaped homodimer laterally assembling into tetramers, the tetramers further pack helically onto the membrane. Interacts with GTP-bound ARF6. Interacts with third cytoplasmic loop of SLC2A4/GLUT4. Interacts with CLTC. Interacts with GULP1. Forms a complex with GDP-bound ARF6 and GULP1. Interacts with ITGB1; required for ITGB1 recycling.

Its subcellular location is the recycling endosome membrane. With respect to regulation, GAP activity stimulated by phosphatidylinositol 4,5-bisphosphate (PIP2) and phosphatidic acid. Functionally, GTPase-activating protein (GAP) for ADP ribosylation factor 6 (ARF6) required for clathrin-dependent export of proteins from recycling endosomes to trans-Golgi network and cell surface. Required for regulated export of ITGB1 from recycling endosomes to the cell surface and ITGB1-dependent cell migration. The polypeptide is Arf-GAP with coiled-coil, ANK repeat and PH domain-containing protein 1 (Acap1) (Mus musculus (Mouse)).